A 381-amino-acid polypeptide reads, in one-letter code: NF-kappa-B inhibitor-like protein 1 (381 aa).

A disordered region spans residues M1 to R32. Positions S14 to S26 are enriched in polar residues. ANK repeat units lie at residues G64–H93 and H97–K133. 3 disordered regions span residues G129–R166, D186–E242, and L257–L294. S150 is modified (phosphoserine). A compositionally biased stretch (acidic residues) spans S150 to V159. Composition is skewed to basic and acidic residues over residues R204–R228 and L257–G270.

In terms of assembly, interacts with CACTIN (via N-terminal domain); the interaction occurs in a pro-inflammatory-independent manner.

The protein localises to the nucleus. Functionally, involved in the regulation of innate immune response. Acts as negative regulator of Toll-like receptor and interferon-regulatory factor (IRF) signaling pathways. Contributes to the negative regulation of transcriptional activation of NF-kappa-B target genes in response to endogenous pro-inflammatory stimuli. This chain is NF-kappa-B inhibitor-like protein 1 (Nfkbil1), found in Rattus norvegicus (Rat).